Reading from the N-terminus, the 269-residue chain is tRNA (guanine-N(7)-)-methyltransferase (269 aa).

Residues 1–38 (MDGVNDAANHTVESVPGRPSTASAPLEAGRRSPTGSRL) are disordered. Glutamate 91, glutamate 116, aspartate 143, and aspartate 166 together coordinate S-adenosyl-L-methionine. Residue aspartate 166 is part of the active site. Substrate is bound by residues lysine 170, aspartate 202, and 247–250 (TKFE).

Belongs to the class I-like SAM-binding methyltransferase superfamily. TrmB family.

It carries out the reaction guanosine(46) in tRNA + S-adenosyl-L-methionine = N(7)-methylguanosine(46) in tRNA + S-adenosyl-L-homocysteine. Its pathway is tRNA modification; N(7)-methylguanine-tRNA biosynthesis. In terms of biological role, catalyzes the formation of N(7)-methylguanine at position 46 (m7G46) in tRNA. This chain is tRNA (guanine-N(7)-)-methyltransferase, found in Nocardia farcinica (strain IFM 10152).